A 205-amino-acid chain; its full sequence is Shieldin complex subunit 1 (205 aa).

In terms of assembly, component of the shieldin complex, consisting of SHLD1, SHLD2, SHLD3 and MAD2L2/REV7. Within the complex, SHLD2 forms a scaffold which interacts with a SHLD3-MAD2L2 subcomplex via its N-terminus, and with SHLD1 via its C-terminus. Interacts with ASTE1.

It is found in the chromosome. In terms of biological role, component of the shieldin complex, which plays an important role in repair of DNA double-stranded breaks (DSBs). During G1 and S phase of the cell cycle, the complex functions downstream of TP53BP1 to promote non-homologous end joining (NHEJ) and suppress DNA end resection. Mediates various NHEJ-dependent processes including immunoglobulin class-switch recombination, and fusion of unprotected telomeres. This is Shieldin complex subunit 1 from Homo sapiens (Human).